The chain runs to 216 residues: Endo-1,4-beta-xylanase 1 (216 aa).

A signal peptide spans 1 to 19; the sequence is MFLTSVVSLVVGAISCVSA. Residues 29-216 form the GH11 domain; sequence QMTPRNSCYG…SSGSASITVS (188 aa). The active-site Nucleophile is glutamate 112. Residue glutamate 203 is the Proton donor of the active site.

This sequence belongs to the glycosyl hydrolase 11 (cellulase G) family.

Its subcellular location is the secreted. The catalysed reaction is Endohydrolysis of (1-&gt;4)-beta-D-xylosidic linkages in xylans.. Its pathway is glycan degradation; xylan degradation. Functionally, endo-1,4-beta-xylanase involved in the hydrolysis of xylan, a major structural heterogeneous polysaccharide found in plant biomass representing the second most abundant polysaccharide in the biosphere, after cellulose. The polypeptide is Endo-1,4-beta-xylanase 1 (xyl1) (Claviceps purpurea (Ergot fungus)).